The chain runs to 168 residues: Photosystem I assembly protein Ycf3 (168 aa).

TPR repeat units follow at residues 35-68 (AFAYYRDGMSAQSEGNYAEALQNYYEAMRLEIDP), 72-105 (SYILYNIGLIHTRNGEHTKALEYYFRALERNPFL), and 120-153 (GEQAIRQGDSEIAEAWFDQAAEYWKQALALTPGN).

This sequence belongs to the Ycf3 family.

It is found in the plastid. It localises to the chloroplast thylakoid membrane. Its function is as follows. Essential for the assembly of the photosystem I (PSI) complex. May act as a chaperone-like factor to guide the assembly of the PSI subunits. This is Photosystem I assembly protein Ycf3 from Morus indica (Mulberry).